The sequence spans 476 residues: MKPTLPNYDQSGVLIVGDVMLDRYWVGPTSRISPEAPVPVVKVENNEERPGGAANVAMNVAALGGQAHLVGLVGEDEPAQALTTTLESLKVHCDFVALPNFPTITKLRVMSRGQQLIRLDFEESFHDIPAEPIISRMQATLPKVKAVVLSDYAKGALEHVQLMIQEARKAGVPVFIDPKGADFERYRGATLLTPNMLEFETVVGKVKDEEDLVVKGQQIIEEFDFEALLVTRSEHGMTLLRSDMAPLHLPTQAREVFDVTGAGDTVISVLAASVSTGKPLDEACALANAAAGVVVGKLGTSTLSTIELAEAIHGSQDSGFGIINEELLISAVKQARERGEKVVMTNGCFDILHAGHVYYLNHAAELGDRLIVAVNTNESVQRLKGPGRPINPTDRRMAVLAGLGAVDWVVPFSEDTPQRLISEVLPTLLVKGGDYEIKDIAGGAEVIAAGGEVKVLNFEDGCSTTGIIEAIKGGRG.

Residues 1–318 (MKPTLPNYDQ…AEAIHGSQDS (318 aa)) are ribokinase. 195-198 (NMLE) is an ATP binding site. Aspartate 264 is an active-site residue. The cytidylyltransferase stretch occupies residues 344 to 476 (MTNGCFDILH…IIEAIKGGRG (133 aa)).

It in the N-terminal section; belongs to the carbohydrate kinase PfkB family. This sequence in the C-terminal section; belongs to the cytidylyltransferase family. Homodimer.

It carries out the reaction D-glycero-beta-D-manno-heptose 7-phosphate + ATP = D-glycero-beta-D-manno-heptose 1,7-bisphosphate + ADP + H(+). It catalyses the reaction D-glycero-beta-D-manno-heptose 1-phosphate + ATP + H(+) = ADP-D-glycero-beta-D-manno-heptose + diphosphate. The protein operates within nucleotide-sugar biosynthesis; ADP-L-glycero-beta-D-manno-heptose biosynthesis; ADP-L-glycero-beta-D-manno-heptose from D-glycero-beta-D-manno-heptose 7-phosphate: step 1/4. It functions in the pathway nucleotide-sugar biosynthesis; ADP-L-glycero-beta-D-manno-heptose biosynthesis; ADP-L-glycero-beta-D-manno-heptose from D-glycero-beta-D-manno-heptose 7-phosphate: step 3/4. Catalyzes the phosphorylation of D-glycero-D-manno-heptose 7-phosphate at the C-1 position to selectively form D-glycero-beta-D-manno-heptose-1,7-bisphosphate. In terms of biological role, catalyzes the ADP transfer from ATP to D-glycero-beta-D-manno-heptose 1-phosphate, yielding ADP-D-glycero-beta-D-manno-heptose. This is Bifunctional protein HldE from Aliivibrio salmonicida (strain LFI1238) (Vibrio salmonicida (strain LFI1238)).